A 357-amino-acid polypeptide reads, in one-letter code: NADH-quinone oxidoreductase subunit H (357 aa).

The next 8 helical transmembrane spans lie at 20 to 40 (WLVLWTIVKIVVIAVPIILCV), 92 to 112 (ILFVVAPVVTLMPALAAWAVV), 127 to 147 (LLYVMAITSIGVYGVIVAGWA), 165 to 185 (VSYELAIGFVLVTVLLVSGSL), 206 to 226 (FLSWNWLPLLPLFVIYVISAV), 254 to 274 (MAFALFFLGEYANMILLSCMA), 294 to 314 (IPGWIWLGIKTFCVVSLFVWF), and 329 to 349 (LGWKIFIPLTGVWLVVVAIWM).

This sequence belongs to the complex I subunit 1 family. NDH-1 is composed of 14 different subunits. Subunits NuoA, H, J, K, L, M, N constitute the membrane sector of the complex.

The protein resides in the cell inner membrane. It carries out the reaction a quinone + NADH + 5 H(+)(in) = a quinol + NAD(+) + 4 H(+)(out). NDH-1 shuttles electrons from NADH, via FMN and iron-sulfur (Fe-S) centers, to quinones in the respiratory chain. The immediate electron acceptor for the enzyme in this species is believed to be ubiquinone. Couples the redox reaction to proton translocation (for every two electrons transferred, four hydrogen ions are translocated across the cytoplasmic membrane), and thus conserves the redox energy in a proton gradient. This subunit may bind ubiquinone. The protein is NADH-quinone oxidoreductase subunit H of Bordetella petrii (strain ATCC BAA-461 / DSM 12804 / CCUG 43448).